A 212-amino-acid chain; its full sequence is uncharacterized protein (212 aa).

This is an uncharacterized protein from Aquifex aeolicus (strain VF5).